The primary structure comprises 204 residues: Histone chaperone ASF1A (204 aa).

An interaction with histone H3, CHAF1B, and HIRA region spans residues 1–156; the sequence is MAKVQVNNVV…TRFHINWEDN (156 aa). The Required for interaction with HIRA signature appears at 31–37; sequence IEDLSED. Residues 155 to 204 are required for interaction with HIRA; sequence DNTEKLEDAESSNPNLQSLLSTDALPSASKGWSTSENSLNVMLESHMDCM. A Phosphoserine modification is found at Ser-192.

The protein belongs to the ASF1 family. Interacts with histone H3 (via C-terminus), including histone H3.1, H3.2 and H3.3, and histone H4; the interaction with H3 is direct. Probably interacts with the heterodimeric form of H3-H4 taking the place of the second dimer. Interacts with the CHAF1A, CHAF1B and RBBP4 subunits of the CAF-1 complex. Interacts with CABIN1, HAT1, HIRA, NASP, TAF1 and UBN1. Found in a soluble complex with NASP and histones H3 and H4; the interaction with NASP is probably indirect and mediated by H3-H4. Interacts with CDAN1. Found in a cytosolic complex with IPO4 and histones H3 and H4. Interacts with CREBBP. Post-translationally, phosphorylated by TLK1 and TLK2. Highly phosphorylated in S-phase and at lower levels in M-phase. TLK2-mediated phosphorylation at Ser-192 prevents proteasome-dependent degradation. Phosphorylation at Ser-192 by PRKDC in response to DNA damage promotes the histone chaperone activity and ability to replace histones at double-strand breaks (DSBs) at stalled or collapsed replication forks, leading to RAD51 recruitment.

The protein localises to the nucleus. The protein resides in the chromosome. Its function is as follows. Histone chaperone that facilitates histone deposition and histone exchange and removal during nucleosome assembly and disassembly. Cooperates with chromatin assembly factor 1 (CAF-1) to promote replication-dependent chromatin assembly and with HIRA to promote replication-independent chromatin assembly. Promotes homologous recombination-mediated repair of double-strand breaks (DSBs) at stalled or collapsed replication forks: acts by mediating histone replacement at DSBs, leading to recruitment of the MMS22L-TONSL complex and subsequent loading of RAD51. Also involved in the nuclear import of the histone H3-H4 dimer together with importin-4 (IPO4): specifically recognizes and binds newly synthesized histones with the monomethylation of H3 'Lys-9' and acetylation at 'Lys-14' (H3K9me1K14ac) marks, and diacetylation at 'Lys-5' and 'Lys-12' of H4 (H4K5K12ac) marks in the cytosol. Required for the formation of senescence-associated heterochromatin foci (SAHF) and efficient senescence-associated cell cycle exit. The sequence is that of Histone chaperone ASF1A from Mus musculus (Mouse).